The primary structure comprises 321 residues: Biotin synthase (321 aa).

The 228-residue stretch at 37-264 folds into the Radical SAM core domain; it reads RDMELCTLSS…TSVIRLSAGR (228 aa). Positions 52, 56, and 59 each coordinate [4Fe-4S] cluster. [2Fe-2S] cluster-binding residues include cysteine 96, cysteine 127, cysteine 187, and arginine 259.

This sequence belongs to the radical SAM superfamily. Biotin synthase family. As to quaternary structure, homodimer. The cofactor is [4Fe-4S] cluster. [2Fe-2S] cluster serves as cofactor.

It catalyses the reaction (4R,5S)-dethiobiotin + (sulfur carrier)-SH + 2 reduced [2Fe-2S]-[ferredoxin] + 2 S-adenosyl-L-methionine = (sulfur carrier)-H + biotin + 2 5'-deoxyadenosine + 2 L-methionine + 2 oxidized [2Fe-2S]-[ferredoxin]. It participates in cofactor biosynthesis; biotin biosynthesis; biotin from 7,8-diaminononanoate: step 2/2. In terms of biological role, catalyzes the conversion of dethiobiotin (DTB) to biotin by the insertion of a sulfur atom into dethiobiotin via a radical-based mechanism. This is Biotin synthase from Coxiella burnetii (strain CbuK_Q154) (Coxiella burnetii (strain Q154)).